The chain runs to 509 residues: ATP synthase subunit alpha, mitochondrial (509 aa).

171–178 (GDRQTGKT) provides a ligand contact to ATP.

Belongs to the ATPase alpha/beta chains family. As to quaternary structure, F-type ATPases have 2 components, CF(1) - the catalytic core - and CF(0) - the membrane proton channel. CF(1) has five subunits: alpha(3), beta(3), gamma(1), delta(1), epsilon(1). CF(0) has three main subunits: a, b and c.

It is found in the mitochondrion. Its subcellular location is the mitochondrion inner membrane. Mitochondrial membrane ATP synthase (F(1)F(0) ATP synthase or Complex V) produces ATP from ADP in the presence of a proton gradient across the membrane which is generated by electron transport complexes of the respiratory chain. F-type ATPases consist of two structural domains, F(1) - containing the extramembraneous catalytic core, and F(0) - containing the membrane proton channel, linked together by a central stalk and a peripheral stalk. During catalysis, ATP synthesis in the catalytic domain of F(1) is coupled via a rotary mechanism of the central stalk subunits to proton translocation. Subunits alpha and beta form the catalytic core in F(1). Rotation of the central stalk against the surrounding alpha(3)beta(3) subunits leads to hydrolysis of ATP in three separate catalytic sites on the beta subunits. Subunit alpha does not bear the catalytic high-affinity ATP-binding sites. This Nicotiana plumbaginifolia (Leadwort-leaved tobacco) protein is ATP synthase subunit alpha, mitochondrial (ATPA).